The chain runs to 701 residues: SH3 domain-binding protein 1 (701 aa).

Positions methionine 1–arginine 10 are enriched in basic residues. Disordered regions lie at residues methionine 1 to glutamate 23 and serine 160 to threonine 182. Positions methionine 1–glycine 275 are interaction with CGNL1. In terms of domain architecture, BAR spans serine 17–serine 262. Phosphoserine is present on residues serine 175, serine 241, serine 262, and serine 264. The region spanning valine 276–phenylalanine 469 is the Rho-GAP domain. An interaction with CD2AP region spans residues proline 470–asparagine 701. A disordered region spans residues serine 496 to asparagine 701. A compositionally biased stretch (pro residues) spans alanine 508–alanine 522. Phosphoserine occurs at positions 544 and 550. Pro residues-rich tracts occupy residues proline 570–glutamine 579 and proline 587–serine 596. Threonine 601 is subject to Phosphothreonine. The SH3-binding signature appears at alanine 616–proline 625. Composition is skewed to pro residues over residues threonine 618–proline 630 and serine 641–proline 652. Threonine 626 is subject to Phosphothreonine. At serine 653 the chain carries Phosphoserine. Low complexity predominate over residues glycine 666 to alanine 677. Residues proline 682–arginine 692 show a composition bias toward pro residues.

As to quaternary structure, interacts with RAC1. Interacts with the exocyst via EXOC4 and EXOC8; required for the localization of both SH3BP1 and the exocyst to the leading edge of migrating cells. Interacts with CD2AP and CGNL1; probably part of a complex at cell junctions. Interacts with CAPZA1; recruits CAPZA1 to forming cell junctions. May interact with AFDN. Interacts with PLXND1; they dissociate upon SEMA3E binding to PLXND1 allowing SH3BP1 to transduce downstream signal through RAC1 inactivation. Interacts with ABL1, GRB2 and SRC (via SH3 domain).

It is found in the cell projection. The protein resides in the cell junction. The protein localises to the tight junction. Its subcellular location is the adherens junction. It localises to the phagocytic cup. It is found in the nucleus. The protein resides in the cytoplasm. The protein localises to the cytosol. Functionally, GTPase activating protein (GAP) which specifically converts GTP-bound Rho-type GTPases including RAC1 and CDC42 in their inactive GDP-bound form. By specifically inactivating RAC1 at the leading edge of migrating cells, it regulates the spatiotemporal organization of cell protrusions which is important for proper cell migration. Also negatively regulates CDC42 in the process of actin remodeling and the formation of epithelial cell junctions. Through its GAP activity toward RAC1 and/or CDC42 plays a specific role in phagocytosis of large particles. Specifically recruited by a PI3 kinase/PI3K-dependent mechanism to sites of large particles engagement, inactivates RAC1 and/or CDC42 allowing the reorganization of the underlying actin cytoskeleton required for engulfment. It also plays a role in angiogenesis and the process of repulsive guidance as part of a semaphorin-plexin signaling pathway. Following the binding of PLXND1 to extracellular SEMA3E it dissociates from PLXND1 and inactivates RAC1, inducing the intracellular reorganization of the actin cytoskeleton and the collapse of cells. The chain is SH3 domain-binding protein 1 from Homo sapiens (Human).